The following is a 419-amino-acid chain: NF-kappa-B essential modulator (419 aa).

Residues 1-48 form a disordered region; the sequence is MSRPPWKSPLCEMVQPSGSPAGDQDMLGEESSLGKPAMLHVPSEQGTP. The tract at residues 1-197 is required for interaction with and ubiquitination by MARCHF2; that stretch reads MSRPPWKSPL…REALEQRHSV (197 aa). Ser31 and Ser43 each carry phosphoserine; by IKKB. The interaction with CHUK/IKBKB stretch occupies residues 44–111; that stretch reads EQGTPETFQR…DLVVRLSLEK (68 aa). A coiled-coil region spans residues 49–353; that stretch reads ETFQRCLEEN…KTSCQESARI (305 aa). Ser68 bears the Phosphoserine mark. Residues Lys111, Lys139, Lys143, Lys226, Lys246, and Lys264 each participate in a glycyl lysine isopeptide (Lys-Gly) (interchain with G-Cter in ubiquitin) cross-link. The tract at residues 150 to 257 is interaction with TANK; it reads LGELQESQSR…SMVSSERNRG (108 aa). The interval 242–350 is ubiquitin-binding (UBAN); the sequence is DNHMKSSMVS…SRLKTSCQES (109 aa). The interval 246–365 is self-association; that stretch reads KSSMVSSERN…MRKRHVEVSQ (120 aa). The required for interaction with TNFAIP3 stretch occupies residues 251–419; sequence SSERNRGLQL…LQIHVMECIE (169 aa). Lys277 is covalently cross-linked (Glycyl lysine isopeptide (Lys-Gly) (interchain with G-Cter in SUMO); alternate). Lys277 is covalently cross-linked (Glycyl lysine isopeptide (Lys-Gly) (interchain with G-Cter in ubiquitin); alternate). Glycyl lysine isopeptide (Lys-Gly) (interchain with G-Cter in ubiquitin) cross-links involve residues Lys283, Lys285, Lys292, and Lys302. A Glycyl lysine isopeptide (Lys-Gly) (interchain with G-Cter in SUMO); alternate cross-link involves residue Lys309. A Glycyl lysine isopeptide (Lys-Gly) (interchain with G-Cter in ubiquitin); alternate cross-link involves residue Lys309. Glycyl lysine isopeptide (Lys-Gly) (interchain with G-Cter in ubiquitin) cross-links involve residues Lys321, Lys325, and Lys326. Residues 322 to 343 are leucine-zipper; it reads LAEKKEFLQEQLEQLQREYSRL. Residues 356–394 form a disordered region; that stretch reads MRKRHVEVSQPPLAPGPAHHSFHLNPSSQRRSPPDEPPK. Ser376 carries the post-translational modification Phosphoserine; by IKKB. The tract at residues 382–419 is interaction with CYLD; that stretch reads SSQRRSPPDEPPKFCCPKCQYQAPDIDTLQIHVMECIE. Position 387 is a phosphoserine (Ser387). Residues 389–419 form a CCHC NOA-type zinc finger; the sequence is PDEPPKFCCPKCQYQAPDIDTLQIHVMECIE. Cys397 contacts Zn(2+). Residue Lys399 forms a Glycyl lysine isopeptide (Lys-Gly) (interchain with G-Cter in ubiquitin) linkage. Zn(2+) is bound by residues Cys400, His413, and Cys417.

As to quaternary structure, homodimer; disulfide-linked. Component of the I-kappa-B-kinase (IKK) core complex consisting of CHUK, IKBKB and IKBKG; probably four alpha/CHUK-beta/IKBKB dimers are associated with four gamma/IKBKG subunits. The IKK core complex seems to associate with regulatory or adapter proteins to form a IKK-signalosome holo-complex. The IKK complex associates with TERF2IP/RAP1, leading to promote IKK-mediated phosphorylation of RELA/p65. Part of a complex composed of NCOA2, NCOA3, CHUK/IKKA, IKBKB, IKBKG and CREBBP. Interacts with COPS3, CYLD, NALP2, TRPC4AP and PIDD1. Interacts with ATM; the complex is exported from the nucleus. Interacts with TRAF6. Interacts with IKBKE. Interacts with TANK; the interaction is enhanced by IKBKE and TBK1. Part of a ternary complex consisting of TANK, IKBKB and IKBKG. Interacts with ZFAND5. Interacts with RIPK2. Interacts with TNIP1 and TNFAIP3; TNIP1 facilitates the TNFAIP3-mediated de-ubiquitination of IKBKG. Interacts with TNFAIP3; the interaction is induced by TNF stimulation and by polyubiquitin. Binds (via UBAN region) polyubiquitin; binds both 'Lys-63'-linked and linear polyubiquitin, with higher affinity for linear ubiquitin. Interacts with NLRP10. Interacts with TANK; this interaction increases in response to DNA damage. Interacts with USP10; this interaction increases in response to DNA damage. Interacts with ZC3H12A; this interaction increases in response to DNA damage. Interacts with IFIT5; the interaction synergizes the recruitment of IKK to MAP3K7 and enhances IKK phosphorylation. Interacts with TRIM29; this interaction induces IKBKG/NEMO ubiquitination and proteolytic degradation. Interacts with TRIM13; this interaction leads to IKBKG/NEMO ubiquitination. Interacts with ARFIP2. Interacts with RIPK1. Interacts with (ubiquitinated) BCL10; interaction with polyubiquitinated BCL10 via both 'Lys-63'-linked and linear ubiquitin is required for TCR-induced NF-kappa-B activation. Interacts with MARCHF2; during the late stages of macrophage viral and bacterial infection; the interaction leads to ubiquitination and degradation of IKBKG/NEMO. Post-translationally, phosphorylation at Ser-68 attenuates aminoterminal homodimerization. In terms of processing, polyubiquitinated on Lys-285 through 'Lys-63'; the ubiquitination is mediated downstream of NOD2 and RIPK2 and probably plays a role in signaling by facilitating interactions with ubiquitin domain-containing proteins and activates the NF-kappa-B pathway. Polyubiquitinated on Lys-399 through 'Lys-63'; the ubiquitination is mediated by BCL10, MALT1 and TRAF6 and probably plays a role in signaling by facilitating interactions with ubiquitin domain-containing proteins and activates the NF-kappa-B pathway. Monoubiquitinated on Lys-277 and Lys-309; promotes nuclear export. Polyubiquitinated through 'Lys-27' by TRIM23; involved in antiviral innate and inflammatory responses. Linear polyubiquitinated on Lys-111, Lys-143, Lys-226, Lys-246, Lys-264, Lys-277, Lys-285, Lys-292, Lys-302, Lys-309 and Lys-326; the head-to-tail polyubiquitination is mediated by the LUBAC complex and plays a key role in NF-kappa-B activation. Deubiquitinated by USP10 in a TANK-dependent and -independent manner, leading to the negative regulation of NF-kappa-B signaling upon DNA damage. Ubiquitinated at Lys-326 by MARCHF2 following bacterial and viral infection which leads to its degradation. Polyubiquitinated via 'Lys-29'-linked ubiquitin; leading to lysosomal degradation. Sumoylated on Lys-277 and Lys-309 with SUMO1. Post-translationally, neddylated by TRIM40, resulting in stabilization of NFKBIA and down-regulation of NF-kappa-B activity.

Its subcellular location is the cytoplasm. The protein localises to the nucleus. In terms of biological role, regulatory subunit of the IKK core complex which phosphorylates inhibitors of NF-kappa-B thus leading to the dissociation of the inhibitor/NF-kappa-B complex and ultimately the degradation of the inhibitor. Its binding to scaffolding polyubiquitin plays a key role in IKK activation by multiple signaling receptor pathways. Can recognize and bind both 'Lys-63'-linked and linear polyubiquitin upon cell stimulation, with a much highr affinity for linear polyubiquitin. Could be implicated in NF-kappa-B-mediated protection from cytokine toxicity. Essential for viral activation of IRF3. Involved in TLR3- and IFIH1-mediated antiviral innate response; this function requires 'Lys-27'-linked polyubiquitination. The chain is NF-kappa-B essential modulator (IKBKG) from Bos taurus (Bovine).